Consider the following 1093-residue polypeptide: Leukemia inhibitory factor receptor (1093 aa).

Positions 1–43 (MGAFSWWRQPSWMADNKRGRMTPSLPWLLSALTLLHLMMHVNG) are cleaved as a signal peptide. The Extracellular portion of the chain corresponds to 44–829 (LKRGVQQDLK…SMFVVTKENS (786 aa)). One can recognise a Fibronectin type-III 1 domain in the interval 45–127 (KRGVQQDLKC…QSKFTLNEKD (83 aa)). Disulfide bonds link Cys-54-Cys-64 and Cys-81-Cys-89. Residues Asn-165, Asn-200, Asn-239, and Asn-262 are each glycosylated (N-linked (GlcNAc...) asparagine). 2 disulfide bridges follow: Cys-209/Cys-266 and Cys-337/Cys-347. Fibronectin type-III domains follow at residues 331 to 428 (VPQK…ERVA), 431 to 530 (VPIS…TEAT), 534 to 625 (GPDT…IPND), 623 to 715 (PNDD…IGYI), and 720 to 829 (PIVA…KENS). N-linked (GlcNAc...) asparagine glycosylation is found at Asn-386, Asn-403, Asn-422, Asn-441, Asn-454, and Asn-477. A disulfide bridge connects residues Cys-462 and Cys-507. The WSXWS motif motif lies at 515–519 (WSKWS). 6 N-linked (GlcNAc...) asparagine glycosylation sites follow: Asn-568, Asn-648, Asn-659, Asn-676, Asn-725, and Asn-783. The helical transmembrane segment at 830–850 (VGLIIAILIPVAVAVIVGVVT) threads the bilayer. Topologically, residues 851 to 1093 (SILCYRKREW…TNFFQNKPND (243 aa)) are cytoplasmic. The Box 1 motif signature appears at 865–873 (FYPDIPNPE). Disordered regions lie at residues 908 to 941 (ESRS…ENQA) and 1003 to 1093 (LPIN…KPND). A phosphoserine mark is found at Ser-923 and Ser-1040. 2 stretches are compositionally biased toward polar residues: residues 1028–1063 (ANVN…NSRQ) and 1082–1093 (SFTNFFQNKPND).

This sequence belongs to the type I cytokine receptor family. Type 2 subfamily. As to quaternary structure, heterodimer composed of LIFR and IL6ST. The heterodimer formed by LIFR and IL6ST interacts with the complex formed by CNTF and CNTFR.

It localises to the cell membrane. In terms of biological role, signal-transducing molecule. May have a common pathway with IL6ST. The soluble form inhibits the biological activity of LIF by blocking its binding to receptors on target cells. The protein is Leukemia inhibitory factor receptor (Lifr) of Rattus norvegicus (Rat).